The chain runs to 415 residues: 3-isopropylmalate dehydratase large subunit (415 aa).

Cysteine 295, cysteine 353, and cysteine 356 together coordinate [4Fe-4S] cluster.

Belongs to the aconitase/IPM isomerase family. LeuC type 2 subfamily. In terms of assembly, heterodimer of LeuC and LeuD. [4Fe-4S] cluster serves as cofactor.

It catalyses the reaction (2R,3S)-3-isopropylmalate = (2S)-2-isopropylmalate. The protein operates within amino-acid biosynthesis; L-leucine biosynthesis; L-leucine from 3-methyl-2-oxobutanoate: step 2/4. Its function is as follows. Catalyzes the isomerization between 2-isopropylmalate and 3-isopropylmalate, via the formation of 2-isopropylmaleate. This is 3-isopropylmalate dehydratase large subunit from Pyrobaculum arsenaticum (strain DSM 13514 / JCM 11321 / PZ6).